Here is a 196-residue protein sequence, read N- to C-terminus: Ribosome-binding factor A (196 aa).

Belongs to the RbfA family. As to quaternary structure, monomer. Binds 30S ribosomal subunits, but not 50S ribosomal subunits or 70S ribosomes.

The protein localises to the cytoplasm. In terms of biological role, one of several proteins that assist in the late maturation steps of the functional core of the 30S ribosomal subunit. Associates with free 30S ribosomal subunits (but not with 30S subunits that are part of 70S ribosomes or polysomes). Required for efficient processing of 16S rRNA. May interact with the 5'-terminal helix region of 16S rRNA. The chain is Ribosome-binding factor A from Tropheryma whipplei (strain TW08/27) (Whipple's bacillus).